A 366-amino-acid polypeptide reads, in one-letter code: Endogenous Bornavirus-like nucleoprotein 1 (366 aa).

Over residues 1-15 (MSRPRNNPQTSSPQD) the composition is skewed to polar residues. Positions 1–22 (MSRPRNNPQTSSPQDSTKDGSS) are disordered.

Expression detected by RT-PCR in a few cell lines, including OL, HEK293T and MOLT-4. Not observed in HeLa cells.

Its function is as follows. May act as an RNA-binding protein. Highly homologous to the bornavirus nucleocapsid N protein that binds viral RNA and oligomerizes. This Homo sapiens (Human) protein is Endogenous Bornavirus-like nucleoprotein 1 (EBLN1).